A 79-amino-acid chain; its full sequence is Large ribosomal subunit protein uL29 (79 aa).

It belongs to the universal ribosomal protein uL29 family.

This Nocardia farcinica (strain IFM 10152) protein is Large ribosomal subunit protein uL29.